We begin with the raw amino-acid sequence, 332 residues long: D-2-hydroxyacid dehydrogenase (NAD(+)) (332 aa).

Catalysis depends on residues arginine 237 and glutamate 266. The Proton donor role is filled by histidine 298.

It belongs to the D-isomer specific 2-hydroxyacid dehydrogenase family. In terms of assembly, monomer.

It carries out the reaction a (2R)-2-hydroxycarboxylate + NAD(+) = a 2-oxocarboxylate + NADH + H(+). The catalysed reaction is (2R)-hydroxy-4-methylpentanoate + NAD(+) = 4-methyl-2-oxopentanoate + NADH + H(+). It functions in the pathway amino-acid degradation; L-leucine degradation. In terms of biological role, involved in the reductive branch of L-leucine fermentation. Catalyzes the NADH-dependent reduction of 4-methyl-2-oxopentanoate (2-oxoisocaproate) to (R)-2-hydroxy-4-methylpentanoate ((R)-2-hydroxyisocaproate). For the reverse reaction, the enzyme accepts (R)- but not (S)-2-hydroxy-4-methylpentanoate. Can also use 2-oxopentanoate, 2-oxohexanoate and phenylpyruvate but not 2-oxoisovalerate and 2-oxobutyrate. Cannot use NADPH. This is D-2-hydroxyacid dehydrogenase (NAD(+)) from Clostridioides difficile (Peptoclostridium difficile).